The sequence spans 139 residues: MLSPKRTKYRKHHRGRMKGKATRGNKIVFGDFALQALEPAWITSRQIEAGRRAMTRYARRGGKLWIRIFPDKPVTMRPAESRMGSGKGSPEYWVAVVKPGKILYEMKGVSEIIARAAMRIASYKMPIKTNFLVKSTSPN.

The segment at 1-20 (MLSPKRTKYRKHHRGRMKGK) is disordered.

The protein belongs to the universal ribosomal protein uL16 family. As to quaternary structure, part of the 50S ribosomal subunit.

It localises to the plastid. Its subcellular location is the chloroplast. This chain is Large ribosomal subunit protein uL16c, found in Pleurastrum terricola (Filamentous green alga).